The sequence spans 1888 residues: E3 ubiquitin-protein ligase UPL3 (1888 aa).

Over residues 1–10 (METRSRKRAE) the composition is skewed to basic and acidic residues. Residues 1–157 (METRSRKRAE…NGGFMHPNMS (157 aa)) are disordered. Low complexity predominate over residues 41–81 (LSSSSSSSLAPTPPSSSTTTRSRSSRSAAAAAPMDTSTDSS). Positions 97-124 (NSDKGKEKEHDVRIRERERERDRAREQL) are enriched in basic and acidic residues. Positions 137–146 (DEDDDNDSED) are enriched in acidic residues. ARM repeat units follow at residues 227-267 (EDSL…HLCD), 270-310 (PSSC…KISQ), 312-349 (HPTA…NMCK), and 351-390 (LPSD…RIAE). Disordered stretches follow at residues 660 to 711 (KPSH…IGAN), 970 to 1119 (ALKP…LPMC), 1134 to 1157 (DDDG…GAAA), and 1280 to 1307 (RLSV…VESQ). A compositionally biased stretch (low complexity) spans 986-1002 (PSGAGVSSPSSSTPAST). Residues 1019 to 1029 (TSKKDPVHEKG) are compositionally biased toward basic and acidic residues. Residues 1076–1113 (SSEDEELEISPVDIDDALVIEEDDISDDEDDDNEDVLD) are compositionally biased toward acidic residues. 2 stretches are compositionally biased toward low complexity: residues 1148–1157 (ASGGTSGAAA) and 1286–1303 (ASST…TNSS). The segment at 1377–1451 (AKVPLDEFVN…ALNRLQQQQG (75 aa)) is K-box. The HECT domain occupies 1490 to 1888 (MYSSQKAVLE…NEGQGSFDLS (399 aa)). C1855 (glycyl thioester intermediate) is an active-site residue.

The protein belongs to the UPL family. K-HECT subfamily. As to expression, widely expressed.

The catalysed reaction is S-ubiquitinyl-[E2 ubiquitin-conjugating enzyme]-L-cysteine + [acceptor protein]-L-lysine = [E2 ubiquitin-conjugating enzyme]-L-cysteine + N(6)-ubiquitinyl-[acceptor protein]-L-lysine.. It participates in protein modification; protein ubiquitination. Probable E3 ubiquitin-protein ligase which mediates ubiquitination and subsequent proteasomal degradation of target proteins. Involved in the repression of endoreduplication process and the cell morphogenesis in the trichomes. The sequence is that of E3 ubiquitin-protein ligase UPL3 (UPL3) from Arabidopsis thaliana (Mouse-ear cress).